Here is a 430-residue protein sequence, read N- to C-terminus: Adenylosuccinate synthetase (430 aa).

GTP-binding positions include 12 to 18 (GDEGKGK) and 40 to 42 (GHT). The active-site Proton acceptor is the Asp13. Positions 13 and 40 each coordinate Mg(2+). Residues 13–16 (DEGK), 38–41 (NAGH), Thr128, Arg142, Gln223, Thr238, and Arg302 each bind IMP. His41 (proton donor) is an active-site residue. 298–304 (TTTGRPR) is a substrate binding site. Residues Arg304, 330-332 (SID), and 412-414 (SVG) each bind GTP.

The protein belongs to the adenylosuccinate synthetase family. In terms of assembly, homodimer. It depends on Mg(2+) as a cofactor.

Its subcellular location is the cytoplasm. It catalyses the reaction IMP + L-aspartate + GTP = N(6)-(1,2-dicarboxyethyl)-AMP + GDP + phosphate + 2 H(+). Its pathway is purine metabolism; AMP biosynthesis via de novo pathway; AMP from IMP: step 1/2. Its function is as follows. Plays an important role in the de novo pathway of purine nucleotide biosynthesis. Catalyzes the first committed step in the biosynthesis of AMP from IMP. The sequence is that of Adenylosuccinate synthetase from Streptococcus pyogenes serotype M4 (strain MGAS10750).